The sequence spans 729 residues: Fatty acid oxidation complex subunit alpha (729 aa).

Residues 1 to 189 (MLYKGDTLYL…KIGLVDGVVK (189 aa)) are enoyl-CoA hydratase/isomerase. Asp-296 contributes to the substrate binding site. The 3-hydroxyacyl-CoA dehydrogenase stretch occupies residues 311–729 (ETPKQAAVLG…ARPVGDLKTA (419 aa)). NAD(+) contacts are provided by residues Met-324, Asp-343, 400–402 (VVE), Lys-407, and Ser-429. His-450 acts as the For 3-hydroxyacyl-CoA dehydrogenase activity in catalysis. Residue Asn-453 coordinates NAD(+). Substrate-binding residues include Asn-500 and Tyr-660. The disordered stretch occupies residues 708–729 (RHNEPYYPPVEPARPVGDLKTA).

In the N-terminal section; belongs to the enoyl-CoA hydratase/isomerase family. It in the C-terminal section; belongs to the 3-hydroxyacyl-CoA dehydrogenase family. Heterotetramer of two alpha chains (FadB) and two beta chains (FadA).

The enzyme catalyses a (3S)-3-hydroxyacyl-CoA + NAD(+) = a 3-oxoacyl-CoA + NADH + H(+). The catalysed reaction is a (3S)-3-hydroxyacyl-CoA = a (2E)-enoyl-CoA + H2O. It catalyses the reaction a 4-saturated-(3S)-3-hydroxyacyl-CoA = a (3E)-enoyl-CoA + H2O. It carries out the reaction (3S)-3-hydroxybutanoyl-CoA = (3R)-3-hydroxybutanoyl-CoA. The enzyme catalyses a (3Z)-enoyl-CoA = a 4-saturated (2E)-enoyl-CoA. The catalysed reaction is a (3E)-enoyl-CoA = a 4-saturated (2E)-enoyl-CoA. The protein operates within lipid metabolism; fatty acid beta-oxidation. Involved in the aerobic and anaerobic degradation of long-chain fatty acids via beta-oxidation cycle. Catalyzes the formation of 3-oxoacyl-CoA from enoyl-CoA via L-3-hydroxyacyl-CoA. It can also use D-3-hydroxyacyl-CoA and cis-3-enoyl-CoA as substrate. This chain is Fatty acid oxidation complex subunit alpha, found in Escherichia coli O6:H1 (strain CFT073 / ATCC 700928 / UPEC).